Consider the following 1902-residue polypeptide: Rho GTPase-activating protein 21-B (1902 aa).

Disordered stretches follow at residues M1–C44, T78–N97, R284–M317, P348–Q369, N409–R450, T581–F603, I613–I632, and K879–S902. Residues E10–I22 show a composition bias toward polar residues. Positions H77 to D162 constitute a PDZ domain. Low complexity predominate over residues T305–M317. The segment covering N409–Q424 has biased composition (polar residues). Residues D903–N1016 form the PH domain. Residues T1039–Q1063 are compositionally biased toward polar residues. The disordered stretch occupies residues T1039–P1095. Positions G1068–S1082 are enriched in basic and acidic residues. The Rho-GAP domain maps to V1103 to F1295. Disordered regions lie at residues T1306–K1357, R1375–D1394, M1494–E1520, V1559–W1704, Q1729–L1748, and T1803–G1890. Low complexity predominate over residues S1339–K1357. Positions M1494–G1511 are enriched in polar residues. Basic and acidic residues-rich tracts occupy residues S1575–E1585 and F1601–S1613. The span at R1614 to S1630 shows a compositional bias: polar residues. Composition is skewed to basic and acidic residues over residues K1634–S1652 and T1661–E1673. Positions R1737 to L1748 are enriched in basic residues. Over residues N1865–S1878 the composition is skewed to polar residues.

The protein resides in the golgi apparatus membrane. Its subcellular location is the cell junction. It is found in the cytoplasmic vesicle membrane. It localises to the cytoplasm. The protein localises to the cytoskeleton. In terms of biological role, GTPase-activating protein (GAP) for rhoa and cdc42. This Xenopus laevis (African clawed frog) protein is Rho GTPase-activating protein 21-B (arhgap21-b).